The primary structure comprises 87 residues: Insertion element IS407 uncharacterized 10.0 kDa protein (87 aa).

Belongs to the transposase 8 family.

The polypeptide is Insertion element IS407 uncharacterized 10.0 kDa protein (Burkholderia multivorans (strain ATCC 17616 / 249)).